Reading from the N-terminus, the 313-residue chain is Porphobilinogen deaminase (313 aa).

Cys-242 bears the S-(dipyrrolylmethanemethyl)cysteine mark.

Belongs to the HMBS family. Monomer. Requires dipyrromethane as cofactor.

The enzyme catalyses 4 porphobilinogen + H2O = hydroxymethylbilane + 4 NH4(+). It functions in the pathway porphyrin-containing compound metabolism; protoporphyrin-IX biosynthesis; coproporphyrinogen-III from 5-aminolevulinate: step 2/4. Its function is as follows. Tetrapolymerization of the monopyrrole PBG into the hydroxymethylbilane pre-uroporphyrinogen in several discrete steps. The chain is Porphobilinogen deaminase from Escherichia coli O17:K52:H18 (strain UMN026 / ExPEC).